The sequence spans 208 residues: Octanoyltransferase (208 aa).

In terms of domain architecture, BPL/LPL catalytic spans 30-208 (GTASEAVFIL…ILKQEFYKIF (179 aa)). Substrate-binding positions include 69 to 76 (RGGKFTYH), 142 to 144 (SIG), and 155 to 157 (GVA). Catalysis depends on Cys173, which acts as the Acyl-thioester intermediate.

This sequence belongs to the LipB family.

It localises to the cytoplasm. It catalyses the reaction octanoyl-[ACP] + L-lysyl-[protein] = N(6)-octanoyl-L-lysyl-[protein] + holo-[ACP] + H(+). It functions in the pathway protein modification; protein lipoylation via endogenous pathway; protein N(6)-(lipoyl)lysine from octanoyl-[acyl-carrier-protein]: step 1/2. Functionally, catalyzes the transfer of endogenously produced octanoic acid from octanoyl-acyl-carrier-protein onto the lipoyl domains of lipoate-dependent enzymes. Lipoyl-ACP can also act as a substrate although octanoyl-ACP is likely to be the physiological substrate. The sequence is that of Octanoyltransferase from Orientia tsutsugamushi (strain Ikeda) (Rickettsia tsutsugamushi).